We begin with the raw amino-acid sequence, 668 residues long: Ras guanine nucleotide exchange factor D (668 aa).

The Rho-GAP domain occupies 27 to 224; the sequence is KKLESIFGIA…LMVMDIDEFD (198 aa). Positions 237 to 362 constitute an N-terminal Ras-GEF domain; the sequence is GESIVKAATF…YFQTFFKPVI (126 aa). The Ras-GEF domain maps to 433–663; the sequence is GSNIIAQQIT…HSISHKLEPR (231 aa).

Promotes the exchange of Ras-bound GDP by GTP. The chain is Ras guanine nucleotide exchange factor D (gefD) from Dictyostelium discoideum (Social amoeba).